The following is a 331-amino-acid chain: Olfactory receptor 7D11 (331 aa).

At 1-25 the chain is on the extracellular side; that stretch reads MEIENHTLITKFLILGLSDDPELQP. Asparagine 5 carries N-linked (GlcNAc...) asparagine glycosylation. Residues 26–46 form a helical membrane-spanning segment; the sequence is ILFGLFLSMYLVTLLGNLLII. The Cytoplasmic portion of the chain corresponds to 47–57; sequence LAVSSDSHLHK. Residues 58-78 form a helical membrane-spanning segment; sequence PMYFLLSNLSFIDICFISTTI. The Extracellular segment spans residues 79-97; the sequence is PKMLVNMQSQIKDISYIEC. Cysteine 97 and cysteine 179 are joined by a disulfide. Residues 98-118 form a helical membrane-spanning segment; the sequence is LTQVFFFNIFAGMDNFLLTLM. Topologically, residues 119 to 142 are cytoplasmic; it reads AYDRFVAICHPLNYTVIMNPRLCA. The helical transmembrane segment at 143–163 threads the bilayer; it reads LLILMFWIIMFWVSLIHVLLM. The Extracellular portion of the chain corresponds to 164–196; the sequence is NELNFSRGTEIPHFFCELAQVLKVSNSDNHVNN. The N-linked (GlcNAc...) asparagine glycan is linked to asparagine 167. A helical transmembrane segment spans residues 197–217; sequence VFMYVVTSLLGVIPMTGILMS. The Cytoplasmic portion of the chain corresponds to 218-244; that stretch reads YSQIFSSLFRMSSTVSKYKAFSTCGSH. A helical transmembrane segment spans residues 245–265; the sequence is LCVVTLFYGSGFGVYFSSSVV. Over 266–271 the chain is Extracellular; that stretch reads HSTQRR. The chain crosses the membrane as a helical span at residues 272-292; the sequence is KVASLMYTVISPMLNPFIYTL. Topologically, residues 293 to 331 are cytoplasmic; that stretch reads RNKDVKGALGKLFNRVASSPSCINDIRNKLLLRSVRQIL.

Belongs to the G-protein coupled receptor 1 family.

It localises to the cell membrane. In terms of biological role, possible olfactory or taste receptor. This is Olfactory receptor 7D11 from Mus musculus (Mouse).